The chain runs to 325 residues: Diadenosine 5',5'''-P1,P4-tetraphosphate phosphorylase 2 (325 aa).

Substrate-binding positions include Lys-53, 92-93 (NK), Asn-148, and 154-157 (GSSQ). The active-site Nucleophile is the His-161. Substrate contacts are provided by residues Gln-163, 277 to 279 (NST), Met-284, and Lys-288.

Belongs to the ATP adenylyltransferase family. Monomer. It depends on a divalent metal cation as a cofactor.

The protein localises to the cytoplasm. It is found in the nucleus. The enzyme catalyses ADP + ATP + H(+) = P(1),P(4)-bis(5'-adenosyl) tetraphosphate + phosphate. It catalyses the reaction sulfate + ADP + H(+) = adenosine 5'-phosphosulfate + phosphate. Its function is as follows. Ap4A phosphorylase catalyzes the phosphorolytic degradation of bis(5'-adenosyl) tetraphosphate (Ap4A) into ADP and ATP. Can also use other Np4N' nucleotides (where N and N' stand for A,C,G or U) as substrates, but prefers A-containing substrates. Cannot catalyze the reverse reaction. Additionally, this enzyme can also catalyze the phosphorolytic degradation of adenosine 5'-phosphosulfate (AMPS) into ADP and sulfate, the reversible exchange reaction between inorganic phosphate and the beta-phosphate of a nucleoside diphosphate (NDP), and the synthesis of Ap4A from AMPS plus ATP. This chain is Diadenosine 5',5'''-P1,P4-tetraphosphate phosphorylase 2, found in Saccharomyces cerevisiae (strain ATCC 204508 / S288c) (Baker's yeast).